Here is a 248-residue protein sequence, read N- to C-terminus: Probable transcriptional regulatory protein Atu3727 (248 aa).

Residues 1-21 (MAGHSQFKNIMHRKGKQDSVR) form a disordered region.

Belongs to the TACO1 family.

The protein resides in the cytoplasm. The sequence is that of Probable transcriptional regulatory protein Atu3727 from Agrobacterium fabrum (strain C58 / ATCC 33970) (Agrobacterium tumefaciens (strain C58)).